The chain runs to 367 residues: Apolipoprotein A-V (367 aa).

The first 20 residues, 1-20 (MVAVLTWALALLSAFATVQT), serve as a signal peptide directing secretion. Residue Ser-56 is modified to Phosphoserine. The tract at residues 71–90 (LGPLSGQGREPPGLPHDPEG) is disordered.

Belongs to the apolipoprotein A1/A4/E family. As to quaternary structure, interacts with GPIHBP1. Interacts with SORL1; this interaction leads to APOA5 internalization and sorting either to lysosomes and degradation, or to the trans-Golgi network. Phosphorylated by FAM20C in the extracellular medium.

It localises to the secreted. The protein resides in the early endosome. The protein localises to the late endosome. Its subcellular location is the golgi apparatus. It is found in the trans-Golgi network. Its function is as follows. Minor apolipoprotein mainly associated with HDL and to a lesser extent with VLDL. May also be associated with chylomicrons. Important determinant of plasma triglyceride (TG) levels by both being a potent stimulator of apo-CII lipoprotein lipase (LPL) TG hydrolysis and an inhibitor of the hepatic VLDL-TG production rate (without affecting the VLDL-apoB production rate). Activates poorly lecithin:cholesterol acyltransferase (LCAT) and does not enhance efflux of cholesterol from macrophages. Binds heparin. This chain is Apolipoprotein A-V (APOA5), found in Neomonachus schauinslandi (Hawaiian monk seal).